A 526-amino-acid chain; its full sequence is Methyltetrahydroprotoberberine 14-monooxygenase (526 aa).

A helical transmembrane segment spans residues 14–34 (LLLQYLQPISVALVVIALVWN). Heme is bound at residue Cys-468.

Belongs to the cytochrome P450 family. Requires heme as cofactor. Mainly expressed in roots, and barely in stems, leaves and carpels.

Its subcellular location is the membrane. It catalyses the reaction (S)-cis-N-methylcanadine + reduced [NADPH--hemoprotein reductase] + O2 = allocryptopine + oxidized [NADPH--hemoprotein reductase] + H2O + 2 H(+). The catalysed reaction is (S)-cis-N-methylstylopine + reduced [NADPH--hemoprotein reductase] + O2 = protopine + oxidized [NADPH--hemoprotein reductase] + H2O + 2 H(+). The enzyme catalyses (S)-cis-N-methyltetrahydrothalifendine + reduced [NADPH--hemoprotein reductase] + O2 = 7-hydroxy-8-methoxy-11-methyl-17,19-dioxa-11-azatetracyclo[12.7.0.0(4,9).0(16,20)]henicosa-1(21),4(9),5,7,14,16(20)-hexaen-2-one + oxidized [NADPH--hemoprotein reductase] + H2O + 2 H(+). It carries out the reaction (S)-cis-N-methyltetrahydropalmatine + reduced [NADPH--hemoprotein reductase] + O2 = muramine + oxidized [NADPH--hemoprotein reductase] + H2O + 2 H(+). The protein operates within alkaloid biosynthesis. With respect to regulation, repressed by cytochrome P450 inhibitors ketoconazole, metyrapone, prochloraz, ancymidol and cytochrome C. Functionally, involved in the biosynthesis of the isoquinoline alkaloid sanguinarine. Catalyzes the conversion of N-methylated protoberberine alkaloids N-methylstylopine and N-methylcanadine into protopine and allocryptopine, respectively. Can also use (S)-cis-N-methyltetrahydrothalifendine and (S)-cis-N-methyltetrahydropalmatine as substrates. The sequence is that of Methyltetrahydroprotoberberine 14-monooxygenase from Papaver somniferum (Opium poppy).